The primary structure comprises 226 residues: ATP synthase subunit a (226 aa).

Transmembrane regions (helical) follow at residues 20–40, 74–94, 100–120, 158–180, and 197–217; these read LNWL…WLLP, FISL…PYIF, LTLT…YGWI, LAVR…GNTG, and IALL…FAVL.

The protein belongs to the ATPase A chain family. F-type ATPases have 2 components, CF(1) - the catalytic core - and CF(0) - the membrane proton channel. CF(1) has five subunits: alpha(3), beta(3), gamma(1), delta(1), epsilon(1). CF(0) has three main subunits: a, b and c.

The protein localises to the mitochondrion inner membrane. Functionally, mitochondrial membrane ATP synthase (F(1)F(0) ATP synthase or Complex V) produces ATP from ADP in the presence of a proton gradient across the membrane which is generated by electron transport complexes of the respiratory chain. F-type ATPases consist of two structural domains, F(1) - containing the extramembraneous catalytic core and F(0) - containing the membrane proton channel, linked together by a central stalk and a peripheral stalk. During catalysis, ATP synthesis in the catalytic domain of F(1) is coupled via a rotary mechanism of the central stalk subunits to proton translocation. Key component of the proton channel; it may play a direct role in the translocation of protons across the membrane. This Anopheles quadrimaculatus (Common malaria mosquito) protein is ATP synthase subunit a (ATP6).